The primary structure comprises 100 residues: Small ribosomal subunit protein uS14c (100 aa).

The protein belongs to the universal ribosomal protein uS14 family. In terms of assembly, part of the 30S ribosomal subunit.

It localises to the plastid. It is found in the chloroplast. Its function is as follows. Binds 16S rRNA, required for the assembly of 30S particles. This Guillardia theta (Cryptophyte) protein is Small ribosomal subunit protein uS14c.